Reading from the N-terminus, the 489-residue chain is RNA polymerase II subunit 5-mediating protein homolog (489 aa).

Disordered stretches follow at residues 141 to 188 (NSDE…MDEE), 200 to 329 (EEKE…EEDE), 396 to 415 (ILKT…SYNE), and 434 to 489 (FENQ…RQNK). Low complexity predominate over residues 157 to 168 (QKSTTTTTTTTT). Basic and acidic residues-rich tracts occupy residues 169-188 (SKDK…MDEE) and 215-224 (FNKKFNKKLD). Acidic residues-rich tracts occupy residues 227-265 (GSDE…EDEK), 276-298 (EEDD…EYYD), and 315-329 (QGDD…EEDE). Residues 396–413 (ILKTNSSGNLMSTIPKSY) show a composition bias toward polar residues. The span at 480 to 489 (SRFKSSRQNK) shows a compositional bias: basic residues.

It belongs to the RNA polymerase II subunit 5-mediating protein family.

The protein resides in the nucleus. The protein is RNA polymerase II subunit 5-mediating protein homolog (rmp) of Dictyostelium discoideum (Social amoeba).